Reading from the N-terminus, the 84-residue chain is Envelope small membrane protein (84 aa).

The Virion surface portion of the chain corresponds to M1 to I18. The helical transmembrane segment at I19–F39 threads the bilayer. The Intravirion portion of the chain corresponds to K40–D80.

It belongs to the betacoronaviruses E protein family. In terms of assembly, homopentamer. Interacts with membrane protein M in the budding compartment of the host cell, which is located between endoplasmic reticulum and the Golgi complex. Interacts with Nucleoprotein.

Its subcellular location is the host Golgi apparatus membrane. Plays a central role in virus morphogenesis and assembly. Acts as a viroporin and self-assembles in host membranes forming pentameric protein-lipid pores that allow ion transport. Also plays a role in the induction of apoptosis. This Porcine hemagglutinating encephalomyelitis virus (strain 67N) (HEV-67N) protein is Envelope small membrane protein.